A 681-amino-acid chain; its full sequence is SRSF protein kinase 2 (681 aa).

Residues 1-63 form a disordered region; sequence MSVNSEKSSS…EQEDPADYCK (63 aa). Pro residues predominate over residues 22-41; sequence LVPPPPPPPPPPPLPDPAPP. The span at 42 to 59 shows a compositional bias: acidic residues; that stretch reads EPEEEILGSDDEEQEDPA. The residue at position 50 (Ser50) is a Phosphoserine. Positions 79 to 681 constitute a Protein kinase domain; that stretch reads YHVIRKLGWG…ECLRHPWLNS (603 aa). ATP-binding positions include 85 to 93 and Lys108; that span reads LGWGHFSTV. The Proton acceptor role is filled by Asp212. Disordered regions lie at residues 237–270, 302–452, and 467–499; these read WQKA…KKKL, ENIT…PLFS, and GSPL…KTKT. 2 positions are modified to phosphothreonine: Thr331 and Thr332. Residue Ser378 is modified to Phosphoserine. Residues 395 to 419 show a composition bias toward acidic residues; the sequence is QLEDEEDDEDDCANPEEYNLDEPNA. Polar residues predominate over residues 421–431; it reads SDYTYSSSYEQ. Phosphoserine is present on Ser468. Thr471 carries the post-translational modification Phosphothreonine. A phosphoserine mark is found at Ser477, Ser479, and Ser483. At Thr485 the chain carries Phosphothreonine; by PKB/AKT1. Ser487 and Ser490 each carry phosphoserine. Phosphoserine; by CK2 is present on Ser581.

Belongs to the protein kinase superfamily. CMGC Ser/Thr protein kinase family. As to quaternary structure, associates with U4/U6-U5 tri-small nuclear ribonucleoproteins (U4/U6-U5 tri-snRNPs). Interacts with PKB/AKT1 in a phosphorylation-dependent manner. The phosphorylated form (by PKB/AKT1) interacts with YWHAB and YWHAE. Interaction with YWHAB suppresses its cleavage by caspases and inhibits the release of its N-terminal pro-apoptotic fragment. Interacts with SFN. Interacts with ACIN1. Interacts with POLR2A/RNA polymerase II; the interaction occurs during the co-transcriptional formation of inappropriate R-loops. It depends on Mg(2+) as a cofactor. Post-translationally, phosphorylation at Thr-485 by PKB/AKT1 enhances its stimulatory activity in triggering cyclin-D1 (CCND1) expression and promoting apoptosis in neurons, which can be blocked by YWHAB. It also enhances its protein kinase activity toward ACIN1 and SRSF2, promotes its nuclear translocation and prevents its proteolytic cleavage. In terms of processing, proteolytically cleaved at Asp-137 and Asp-401 by caspase-3 during apoptotic cell death. Cleavage at Asp-137 which is the major site of cleavage, produces a small N-terminal fragment that translocates into nucleus and promotes VP16-induced apoptosis. In terms of tissue distribution, expressed in testes, lung and brain.

It is found in the cytoplasm. The protein localises to the nucleus. It localises to the nucleoplasm. Its subcellular location is the nucleus speckle. The protein resides in the chromosome. The enzyme catalyses L-seryl-[protein] + ATP = O-phospho-L-seryl-[protein] + ADP + H(+). It catalyses the reaction L-threonyl-[protein] + ATP = O-phospho-L-threonyl-[protein] + ADP + H(+). Its activity is regulated as follows. Activated by phosphorylation on Ser-50 and Ser-581. Its function is as follows. Serine/arginine-rich protein-specific kinase which specifically phosphorylates its substrates at serine residues located in regions rich in arginine/serine dipeptides, known as RS domains and is involved in the phosphorylation of SR splicing factors and the regulation of splicing. Promotes neuronal apoptosis by up-regulating cyclin-D1 (CCND1) expression. This is done by the phosphorylation of SRSF2, leading to the suppression of p53/TP53 phosphorylation thereby relieving the repressive effect of p53/TP53 on cyclin-D1 (CCND1) expression. Phosphorylates ACIN1, and redistributes it from the nuclear speckles to the nucleoplasm, resulting in cyclin A1 but not cyclin A2 up-regulation. Plays an essential role in spliceosomal B complex formation via the phosphorylation of DDX23/PRP28. Probably by phosphorylating DDX23, leads to the suppression of incorrect R-loops formed during transcription; R-loops are composed of a DNA:RNA hybrid and the associated non-template single-stranded DNA. This Mus musculus (Mouse) protein is SRSF protein kinase 2.